An 858-amino-acid chain; its full sequence is Toll-like receptor 5 (858 aa).

Residues 1–20 form the signal peptide; that stretch reads MGDHLDLLLGVVLMAGPVFG. Over 21 to 639 the chain is Extracellular; that stretch reads IPSCSFDGRI…DEEEVLKSLK (619 aa). 2 N-linked (GlcNAc...) asparagine glycosylation sites follow: Asn-37 and Asn-46. LRR repeat units lie at residues 45 to 68, 71 to 93, 95 to 117, 120 to 143, 146 to 166, 171 to 192, 197 to 211, 214 to 229, and 234 to 235; these read LNTT…SFPF, QLQL…AFRN, PNLR…AFQG, HLFE…YFRN, ALTR…HPSF, SLKS…ELEP, TLSF…LYSR, VDWG…MVLE, and SG. N-linked (GlcNAc...) asparagine glycosylation occurs at Asn-245. LRR repeat units follow at residues 260–284, 289–301, 313–334, 337–355, 385–401, 412–431, 449–470, 474–495, 503–524, 527–546, and 549–567; these read LAHH…TFAG, SVRH…GFVF, DLKV…AFYG, NLQV…YSSN, KLQT…TIHF, GNKL…IHLS, HLQI…QTPS, SLEQ…ELCW, HLQV…VFSH, ALRG…HNDL, and NLEI…NPDV. Asn-342 is a glycosylation site (N-linked (GlcNAc...) asparagine). The N-linked (GlcNAc...) asparagine glycan is linked to Asn-422. An LRRCT domain is found at 579–631; sequence NKFICECELSTFINWLNHTNVTIAGPPADIYCVYPDSFSGVSLFSLSTEGCDE. Intrachain disulfides connect Cys-583–Cys-610 and Cys-585–Cys-629. 2 N-linked (GlcNAc...) asparagine glycosylation sites follow: Asn-595 and Asn-598. A helical transmembrane segment spans residues 640 to 660; it reads FSLFIVCTVTLTLFLMTILTV. The Cytoplasmic portion of the chain corresponds to 661–858; the sequence is TKFRGFCFIC…IPLQTVATIS (198 aa). Residues 691 to 836 enclose the TIR domain; it reads YKYDAYLCFS…WFLHKLSQQI (146 aa). Tyr-798 carries the post-translational modification Phosphotyrosine. Phosphoserine; by PKD/PRKD1 is present on Ser-805.

Belongs to the Toll-like receptor family. In terms of assembly, homodimer. Interacts with MYD88 (via TIR domain). Interacts with TICAM1 (via TIR domain). Interacts with UNC93B1; this interaction is essential for proper TLR5 localization to the plasma membrane. Post-translationally, phosphorylated at Ser-805 by PKD/PRKD1; phosphorylation induces the production of inflammatory cytokines. Phosphorylated at Tyr-798 upon flagellin binding; required for signaling. Highly expressed on the basolateral surface of intestinal epithelia. Expressed also in other cells such as lung epithelial cells.

It localises to the cell membrane. Functionally, pattern recognition receptor (PRR) located on the cell surface that participates in the activation of innate immunity and inflammatory response. Recognizes small molecular motifs named pathogen-associated molecular pattern (PAMPs) expressed by pathogens and microbe-associated molecular patterns (MAMPs) usually expressed by resident microbiota. Upon ligand binding such as bacterial flagellins, recruits intracellular adapter proteins MYD88 and TRIF leading to NF-kappa-B activation, cytokine secretion and induction of the inflammatory response. Plays thereby an important role in the relationship between the intestinal epithelium and enteric microbes and contributes to the gut microbiota composition throughout life. The polypeptide is Toll-like receptor 5 (TLR5) (Homo sapiens (Human)).